The primary structure comprises 245 residues: Ribosomal RNA large subunit methyltransferase E (245 aa).

The tract at residues 1–25 (MTKSPIGGNRSGRKLGQKVKKGKLK) is disordered. The span at 11-25 (SGRKLGQKVKKGKLK) shows a compositional bias: basic residues. Positions 81, 83, 104, 120, and 144 each coordinate S-adenosyl-L-methionine. The Proton acceptor role is filled by Lys-184.

It belongs to the class I-like SAM-binding methyltransferase superfamily. RNA methyltransferase RlmE family.

It is found in the cytoplasm. The catalysed reaction is uridine(2552) in 23S rRNA + S-adenosyl-L-methionine = 2'-O-methyluridine(2552) in 23S rRNA + S-adenosyl-L-homocysteine + H(+). Specifically methylates the uridine in position 2552 of 23S rRNA at the 2'-O position of the ribose in the fully assembled 50S ribosomal subunit. The chain is Ribosomal RNA large subunit methyltransferase E from Sinorhizobium fredii (strain NBRC 101917 / NGR234).